Reading from the N-terminus, the 719-residue chain is DNA ligase (719 aa).

NAD(+) is bound by residues 42–46, 91–92, and Glu125; these read DAEYD and SL. Lys127 (N6-AMP-lysine intermediate) is an active-site residue. NAD(+)-binding residues include Arg148, Glu184, Lys300, and Lys324. Residues Cys429, Cys432, Cys447, and Cys453 each contribute to the Zn(2+) site. Residues 638–719 enclose the BRCT domain; the sequence is TASSPIAEKI…WMRLIKGHNI (82 aa).

It belongs to the NAD-dependent DNA ligase family. LigA subfamily. Mg(2+) is required as a cofactor. Mn(2+) serves as cofactor.

It catalyses the reaction NAD(+) + (deoxyribonucleotide)n-3'-hydroxyl + 5'-phospho-(deoxyribonucleotide)m = (deoxyribonucleotide)n+m + AMP + beta-nicotinamide D-nucleotide.. Functionally, DNA ligase that catalyzes the formation of phosphodiester linkages between 5'-phosphoryl and 3'-hydroxyl groups in double-stranded DNA using NAD as a coenzyme and as the energy source for the reaction. It is essential for DNA replication and repair of damaged DNA. The protein is DNA ligase of Bartonella tribocorum (strain CIP 105476 / IBS 506).